A 515-amino-acid polypeptide reads, in one-letter code: Maturase K (515 aa).

The protein belongs to the intron maturase 2 family. MatK subfamily.

The protein localises to the plastid. It is found in the chloroplast. Its function is as follows. Usually encoded in the trnK tRNA gene intron. Probably assists in splicing its own and other chloroplast group II introns. In Pinus luchuensis (Ryukyu island pine), this protein is Maturase K.